We begin with the raw amino-acid sequence, 72 residues long: Cytochrome c oxidase subunit 8C, mitochondrial (72 aa).

Residues 1–29 (MSRLLLLCSSLLRHRAVLFSKPGHPGRLS) constitute a mitochondrion transit peptide. The Mitochondrial matrix portion of the chain corresponds to 30-40 (HSESPQKKILS). The chain crosses the membrane as a helical span at residues 41 to 64 (PTESAVGIVVFFTTFYIPAAYVLS). Residues 65–72 (SLKYFKGE) lie on the Mitochondrial intermembrane side of the membrane.

This sequence belongs to the cytochrome c oxidase VIII family. Component of the cytochrome c oxidase (complex IV, CIV), a multisubunit enzyme composed of 14 subunits. The complex is composed of a catalytic core of 3 subunits MT-CO1, MT-CO2 and MT-CO3, encoded in the mitochondrial DNA, and 11 supernumerary subunits COX4I, COX5A, COX5B, COX6A, COX6B, COX6C, COX7A, COX7B, COX7C, COX8 and NDUFA4, which are encoded in the nuclear genome. The complex exists as a monomer or a dimer and forms supercomplexes (SCs) in the inner mitochondrial membrane with NADH-ubiquinone oxidoreductase (complex I, CI) and ubiquinol-cytochrome c oxidoreductase (cytochrome b-c1 complex, complex III, CIII), resulting in different assemblies (supercomplex SCI(1)III(2)IV(1) and megacomplex MCI(2)III(2)IV(2)).

It localises to the mitochondrion inner membrane. It participates in energy metabolism; oxidative phosphorylation. Component of the cytochrome c oxidase, the last enzyme in the mitochondrial electron transport chain which drives oxidative phosphorylation. The respiratory chain contains 3 multisubunit complexes succinate dehydrogenase (complex II, CII), ubiquinol-cytochrome c oxidoreductase (cytochrome b-c1 complex, complex III, CIII) and cytochrome c oxidase (complex IV, CIV), that cooperate to transfer electrons derived from NADH and succinate to molecular oxygen, creating an electrochemical gradient over the inner membrane that drives transmembrane transport and the ATP synthase. Cytochrome c oxidase is the component of the respiratory chain that catalyzes the reduction of oxygen to water. Electrons originating from reduced cytochrome c in the intermembrane space (IMS) are transferred via the dinuclear copper A center (CU(A)) of subunit 2 and heme A of subunit 1 to the active site in subunit 1, a binuclear center (BNC) formed by heme A3 and copper B (CU(B)). The BNC reduces molecular oxygen to 2 water molecules using 4 electrons from cytochrome c in the IMS and 4 protons from the mitochondrial matrix. The protein is Cytochrome c oxidase subunit 8C, mitochondrial (Cox8c) of Mus musculus (Mouse).